Here is a 1032-residue protein sequence, read N- to C-terminus: Beta-galactosidase (1032 aa).

Substrate is bound by residues N100 and D198. Position 198 (D198) interacts with Na(+). Mg(2+) is bound by residues E413, H415, and E458. Substrate-binding positions include E458 and 534 to 537 (EYAH). The active-site Proton donor is the E458. Catalysis depends on E534, which acts as the Nucleophile. N594 is a Mg(2+) binding site. Positions 598 and 601 each coordinate Na(+). Residues N601 and W1006 each coordinate substrate.

Belongs to the glycosyl hydrolase 2 family. As to quaternary structure, homotetramer. Mg(2+) is required as a cofactor. Requires Na(+) as cofactor.

It catalyses the reaction Hydrolysis of terminal non-reducing beta-D-galactose residues in beta-D-galactosides.. The protein is Beta-galactosidase of Vibrio vulnificus (strain CMCP6).